Reading from the N-terminus, the 95-residue chain is Aspartyl/glutamyl-tRNA(Asn/Gln) amidotransferase subunit C (95 aa).

This sequence belongs to the GatC family. Heterotrimer of A, B and C subunits.

It carries out the reaction L-glutamyl-tRNA(Gln) + L-glutamine + ATP + H2O = L-glutaminyl-tRNA(Gln) + L-glutamate + ADP + phosphate + H(+). The catalysed reaction is L-aspartyl-tRNA(Asn) + L-glutamine + ATP + H2O = L-asparaginyl-tRNA(Asn) + L-glutamate + ADP + phosphate + 2 H(+). In terms of biological role, allows the formation of correctly charged Asn-tRNA(Asn) or Gln-tRNA(Gln) through the transamidation of misacylated Asp-tRNA(Asn) or Glu-tRNA(Gln) in organisms which lack either or both of asparaginyl-tRNA or glutaminyl-tRNA synthetases. The reaction takes place in the presence of glutamine and ATP through an activated phospho-Asp-tRNA(Asn) or phospho-Glu-tRNA(Gln). In Citrifermentans bemidjiense (strain ATCC BAA-1014 / DSM 16622 / JCM 12645 / Bem) (Geobacter bemidjiensis), this protein is Aspartyl/glutamyl-tRNA(Asn/Gln) amidotransferase subunit C.